Here is a 415-residue protein sequence, read N- to C-terminus: Protein-lysine N-trimethyltransferase SMYD5 (415 aa).

The 332-residue stretch at 20-351 (NCVDVRFINN…PGEEICISYL (332 aa)) folds into the SET domain. The segment at 95-135 (PHPELCKVRPDRHQACPQCQVMYCSSECRQAAMDQYHKILC) adopts an MYND-type zinc-finger fold. Residue Y350 coordinates S-adenosyl-L-methionine. Residues 388–415 (DMTSEDEEEVEGEGETEGEDMEDEMTDV) are disordered.

Belongs to the class V-like SAM-binding methyltransferase superfamily. Expressed at high levels in the ovary and at lower levels in the fin, testis and brain.

Its subcellular location is the cytoplasm. It catalyses the reaction L-lysyl-[protein] + 3 S-adenosyl-L-methionine = N(6),N(6),N(6)-trimethyl-L-lysyl-[protein] + 3 S-adenosyl-L-homocysteine + 3 H(+). The catalysed reaction is L-lysyl(20)-[histone H4] + 3 S-adenosyl-L-methionine = N(6),N(6),N(6)-trimethyl-L-lysyl(20)-[histone H4] + 3 S-adenosyl-L-homocysteine + 3 H(+). The enzyme catalyses L-lysyl(36)-[histone H3] + 3 S-adenosyl-L-methionine = N(6),N(6),N(6)-trimethyl-L-lysyl(36)-[histone H3] + 3 S-adenosyl-L-homocysteine + 3 H(+). Protein-lysine N-trimethyltransferase that specifically catalyzes trimethylation of 'Lys-22' of the RPL40/eL40 subunit of the 60S ribosome, thereby promoting translation elongation and protein synthesis. May also act as a histone methyltransferase in the context of histone octamers, but not on nucleosome substrates: trimethylates 'Lys-36' of histone H3 and 'Lys-20' of histone H4 to form H3K36me3 and H4K20me3, respectively. The histone methyltransferase activity, which is independent of its SET domain, is however unsure in vivo. Plays a crucial role in hematopoiesis during embryogenesis by negatively regulating expression of genes related to both primitive and definitive hematopoiesis. This is Protein-lysine N-trimethyltransferase SMYD5 from Danio rerio (Zebrafish).